The following is a 633-amino-acid chain: Phosphomethylpyrimidine synthase (633 aa).

Residues N245, M274, Y303, H339, 359-361 (SRG), 400-403 (DGLR), and E439 contribute to the substrate site. H443 contacts Zn(2+). Y466 provides a ligand contact to substrate. Residue H507 participates in Zn(2+) binding. C587, C590, and C595 together coordinate [4Fe-4S] cluster.

The protein belongs to the ThiC family. In terms of assembly, homodimer. The cofactor is [4Fe-4S] cluster.

The catalysed reaction is 5-amino-1-(5-phospho-beta-D-ribosyl)imidazole + S-adenosyl-L-methionine = 4-amino-2-methyl-5-(phosphooxymethyl)pyrimidine + CO + 5'-deoxyadenosine + formate + L-methionine + 3 H(+). It participates in cofactor biosynthesis; thiamine diphosphate biosynthesis. Functionally, catalyzes the synthesis of the hydroxymethylpyrimidine phosphate (HMP-P) moiety of thiamine from aminoimidazole ribotide (AIR) in a radical S-adenosyl-L-methionine (SAM)-dependent reaction. The polypeptide is Phosphomethylpyrimidine synthase (Neisseria meningitidis serogroup B (strain ATCC BAA-335 / MC58)).